The sequence spans 312 residues: Putative clathrin assembly protein At2g01920 (312 aa).

One can recognise an ENTH domain in the interval 21-152; sequence LITATDEKFT…ILYYNKNMIR (132 aa).

It localises to the membrane. The protein resides in the clathrin-coated pit. Its subcellular location is the golgi apparatus. The protein localises to the cytoplasmic vesicle. It is found in the clathrin-coated vesicle. The chain is Putative clathrin assembly protein At2g01920 from Arabidopsis thaliana (Mouse-ear cress).